We begin with the raw amino-acid sequence, 541 residues long: Thioredoxin reductase (541 aa).

Residues 51–52 (PG), 71–74 (DYVK), 87–88 (TC), 92–96 (GCVPK), alanine 161, aspartate 357, and 364–366 (ELA) contribute to the FAD site. Cysteine 88 and cysteine 93 form a disulfide bridge. The segment at 438–452 (HRQKHIRAQKDEYDL) is loop important for the interaction with TRX1. Histidine 509 is an FAD binding site. Residue histidine 509 is the Proton acceptor of the active site. A disulfide bond links cysteine 535 and cysteine 540.

The protein belongs to the class-I pyridine nucleotide-disulfide oxidoreductase family. Homodimer. The cofactor is FAD.

The protein localises to the cytoplasm. It catalyses the reaction [thioredoxin]-dithiol + NADP(+) = [thioredoxin]-disulfide + NADPH + H(+). Catalyzes the transfer of electrons from NADPH to thioredoxins TRX1, TRX2 and TRX3, which in turn act as reductants of disulfide containing proteins. Able to reduce nitroglutathione (GSNO), a compound involved in the transport of nitric oxide (NO); however, TRX1 is more efficient in reducing GSNO. Has no catalytic activity towards oxidized glutathione (GSSG). In Plasmodium falciparum (isolate FCH-5), this protein is Thioredoxin reductase.